The primary structure comprises 360 residues: DNA replication and repair protein RecF (360 aa).

An ATP-binding site is contributed by 30–37; sequence GQNGSGKT.

Belongs to the RecF family.

The protein localises to the cytoplasm. Functionally, the RecF protein is involved in DNA metabolism; it is required for DNA replication and normal SOS inducibility. RecF binds preferentially to single-stranded, linear DNA. It also seems to bind ATP. In Shewanella oneidensis (strain ATCC 700550 / JCM 31522 / CIP 106686 / LMG 19005 / NCIMB 14063 / MR-1), this protein is DNA replication and repair protein RecF.